A 425-amino-acid polypeptide reads, in one-letter code: CinA-like protein (425 aa).

The protein belongs to the CinA family.

The sequence is that of CinA-like protein from Mycobacterium marinum (strain ATCC BAA-535 / M).